A 734-amino-acid chain; its full sequence is MGYTLQQILRSICSNTDWNYAVFWKLNHHSPMVLTLEDVYCVNHERGLMPESLHGGRHAHDPLGLAVAKMSYHVHSLGEGIVGQVAISGQHQWIFSEYLNDSHSTLQVHNGWESQISAGIKTILIVAVGSCGVVQLGSLCKVEEDPALVTHIRHLFLALTDPLADHASNLMQCDINSPSDRPKIPSKCLHEASPDFSGEFDKAMDMEGLNIVSQNTSNRSNDLPYNFTPTYFHMERTAQVIGGLEAVQPSMFGSNDCVTSGFSVGVVDTKHKNQVDISDMSKVIYDEETGGYRYSRELDPNFQHYSRNHVRNSGGTSALAMESDRLKAGSSYPQLDSTVLTALKTDKDYSRRNEVFQPSESQGSIFVKDTEHRQEEKSESSQLDALTASLCSFSGSELLEALGPAFSKTSTDYGELAKFESAAAIRRTNDMSHSHLTFESSSENLLDAVVASMSNGDGNVRREISSSRSTQSLLTTAEMAQAEPFGHNKQNIVSTVDSVISQPPLADGLIQQNPSNICGAFSSIGFSSTCLSSSSDQFPTSLEIPKKNKKRAKPGESSRPRPRDRQLIQDRIKELRELVPNGSKCSIDSLLECTIKHMLFLQSVSQHADKLTKSASSKMQHKDTGTLGISSTEQGSSWAVEIGGHLQVCSIMVENLDKEGVMLIEMLCEECSHFLEIANVIRSLELIILRGTTEKQGEKTWICFVVEGQNNKVMHRMDILWSLVQIFQPKATNR.

Residues Q537–Q566 form a disordered region. The Nuclear localization signal signature appears at N548–G555. A bHLH domain is found at A552–L601. Residues K553–Q566 are compositionally biased toward basic and acidic residues.

This sequence belongs to the bHLH protein family. LHW subfamily. As to quaternary structure, homodimer.

It localises to the nucleus. Its function is as follows. Transcription factor that may regulate root development. The polypeptide is Transcription factor EMB1444 (Arabidopsis thaliana (Mouse-ear cress)).